Reading from the N-terminus, the 257-residue chain is Ribonuclease HII (257 aa).

The 187-residue stretch at 71–257 (SLIAGIDEVG…TSFEPIKSML (187 aa)) folds into the RNase H type-2 domain. Asp-77, Glu-78, and Asp-172 together coordinate a divalent metal cation.

Belongs to the RNase HII family. Requires Mn(2+) as cofactor. Mg(2+) is required as a cofactor.

The protein localises to the cytoplasm. It catalyses the reaction Endonucleolytic cleavage to 5'-phosphomonoester.. Endonuclease that specifically degrades the RNA of RNA-DNA hybrids. This chain is Ribonuclease HII, found in Streptococcus uberis (strain ATCC BAA-854 / 0140J).